Reading from the N-terminus, the 43-residue chain is Potassium channel toxin gamma-KTx 4.12 (43 aa).

Cystine bridges form between Cys5-Cys23, Cys11-Cys34, Cys20-Cys39, and Cys24-Cys41.

As to expression, expressed by the venom gland.

It localises to the secreted. Reversibly blocks Kv11/ERG potassium channels. Is less toxic than ergtoxin (AC Q86QT3). The chain is Potassium channel toxin gamma-KTx 4.12 from Centruroides sculpturatus (Arizona bark scorpion).